Reading from the N-terminus, the 430-residue chain is Retinoic acid receptor RXR-alpha-A (430 aa).

A compositionally biased stretch (low complexity) spans 1 to 20 (MHPSLLSPTSLGPSGSLHSP). Disordered stretches follow at residues 1–25 (MHPSLLSPTSLGPSGSLHSPISTLS) and 48–73 (ASPGVGYGPSISPQLNSHMNSVSSSE). The interval 1–99 (MHPSLLSPTS…QPSGTPLSLT (99 aa)) is modulating. Residues 58–72 (ISPQLNSHMNSVSSS) show a composition bias toward polar residues. The nuclear receptor DNA-binding region spans 100–175 (KHICAICGDR…MGMKREAVQE (76 aa)). Zn(2+)-binding residues include Cys-103, Cys-106, Cys-120, and Cys-123. The NR C4-type zinc-finger motif lies at 103 to 123 (CAICGDRSSGKHYGVYSCEGC). The nuclear localization signal stretch occupies residues 128 to 133 (KRTVRK). Residues Cys-139, Cys-145, Cys-155, and Cys-158 each contribute to the Zn(2+) site. The segment at 139-158 (CRDNKDCVIDKRQRNRCQYC) adopts an NR C4-type zinc-finger fold. The span at 174–186 (QEERQRAKERSEN) shows a compositional bias: basic and acidic residues. The tract at residues 174–196 (QEERQRAKERSENEVESTSSANE) is disordered. The interval 176 to 192 (ERQRAKERSENEVESTS) is hinge. An NR LBD domain is found at 195-426 (NEDMPVEKIL…TFLMEMLEAP (232 aa)). The 9-cis-retinoate site is built by Arg-284 and Ala-295. Arg-284 and Ala-295 together coordinate all-trans-retinoate. The interval 316-336 (RVLTELVSKMRDMQMDKTELG) is required for nuclear export. The tract at residues 415 to 426 (IDTFLMEMLEAP) is AF-2.

The protein belongs to the nuclear hormone receptor family. NR2 subfamily. As to quaternary structure, homodimer. Heterodimer; with a rar molecule. Binds DNA preferentially as a rar/rxr heterodimer.

The protein localises to the nucleus. Receptor for retinoic acid that acts as a transcription factor. Forms homo- or heterodimers with retinoic acid receptors (rars) and binds to target response elements in response to their ligands, all-trans or 9-cis retinoic acid, to regulate gene expression in various biological processes. The rar/rxr heterodimers bind to the retinoic acid response elements (RARE) composed of tandem 5'-AGGTCA-3' sites known as DR1-DR5 to regulate transcription. The high affinity ligand for rxrs is 9-cis retinoic acid. In the absence of ligand, the rar/rxr heterodimers associate with a multiprotein complex containing transcription corepressors that induce histone deacetylation, chromatin condensation and transcriptional suppression. On ligand binding, the corepressors dissociate from the receptors and coactivators are recruited leading to transcriptional activation. This is Retinoic acid receptor RXR-alpha-A from Danio rerio (Zebrafish).